A 446-amino-acid polypeptide reads, in one-letter code: tRNA-2-methylthio-N(6)-dimethylallyladenosine synthase (446 aa).

The MTTase N-terminal domain occupies 3–120 (KKIYIKTFGC…LPEMLKQRRS (118 aa)). [4Fe-4S] cluster contacts are provided by Cys-12, Cys-49, Cys-83, Cys-157, Cys-161, and Cys-164. Positions 143–375 (KVEGATAFVS…QAVIDQNTRR (233 aa)) constitute a Radical SAM core domain. Residues 378-444 (DEMVGTVQRI…AYTLRGEIIV (67 aa)) form the TRAM domain.

Belongs to the methylthiotransferase family. MiaB subfamily. Monomer. It depends on [4Fe-4S] cluster as a cofactor.

It localises to the cytoplasm. The enzyme catalyses N(6)-dimethylallyladenosine(37) in tRNA + (sulfur carrier)-SH + AH2 + 2 S-adenosyl-L-methionine = 2-methylsulfanyl-N(6)-dimethylallyladenosine(37) in tRNA + (sulfur carrier)-H + 5'-deoxyadenosine + L-methionine + A + S-adenosyl-L-homocysteine + 2 H(+). Functionally, catalyzes the methylthiolation of N6-(dimethylallyl)adenosine (i(6)A), leading to the formation of 2-methylthio-N6-(dimethylallyl)adenosine (ms(2)i(6)A) at position 37 in tRNAs that read codons beginning with uridine. This Janthinobacterium sp. (strain Marseille) (Minibacterium massiliensis) protein is tRNA-2-methylthio-N(6)-dimethylallyladenosine synthase.